Reading from the N-terminus, the 409-residue chain is Bone morphogenetic protein 4 (409 aa).

The N-terminal stretch at 1–24 (MIPGNRMLMVVLLCQVLLGGASHA) is a signal peptide. The propeptide occupies 25–293 (SLIPETGKKK…ALTRRRRAKR (269 aa)). Ser91 is subject to Phosphoserine. Residues Asn144 and Asn209 are each glycosylated (N-linked (GlcNAc...) asparagine). Residues 284–308 (ALTRRRRAKRSPKHHPQRARKKNKN) form a disordered region. Intrachain disulfides connect Cys309–Cys374, Cys338–Cys406, and Cys342–Cys408. N-linked (GlcNAc...) asparagine glycans are attached at residues Asn351 and Asn366.

It belongs to the TGF-beta family. As to quaternary structure, homodimer; disulfide-linked. Interacts with GREM2. Part of a complex consisting of TWSG1 and CHRD. Interacts with the serine proteases, HTRA1 and HTRA3; the interaction with either inhibits BMP4-mediated signaling. The HTRA protease activity is required for this inhibition. Interacts with SOSTDC1. Interacts with FBN1 (via N-terminal domain) and FBN2. Interacts with type I receptor BMPR1A. Interacts with type II receptor BMPR2. Interacts with FSTL1; this interaction inhibits the activation of the BMP4/Smad1/5/8 signaling pathway. Interacts with SCUBE3. Interacts with TGFBR3.

The protein resides in the secreted. Its subcellular location is the extracellular space. It localises to the extracellular matrix. Its function is as follows. Growth factor of the TGF-beta superfamily that plays essential roles in many developmental processes, including neurogenesis, vascular development, angiogenesis and osteogenesis. Acts in concert with PTHLH/PTHRP to stimulate ductal outgrowth during embryonic mammary development and to inhibit hair follicle induction. Initiates the canonical BMP signaling cascade by associating with type I receptor BMPR1A and type II receptor BMPR2. Once all three components are bound together in a complex at the cell surface, BMPR2 phosphorylates and activates BMPR1A. In turn, BMPR1A propagates signal by phosphorylating SMAD1/5/8 that travel to the nucleus and act as activators and repressors of transcription of target genes. Positively regulates the expression of odontogenic development regulator MSX1 via inducing the IPO7-mediated import of SMAD1 to the nucleus. Required for MSX1-mediated mesenchymal molar tooth bud development beyond the bud stage, via promoting Wnt signaling. Acts as a positive regulator of odontoblast differentiation during mesenchymal tooth germ formation, expression is repressed during the bell stage by MSX1-mediated inhibition of CTNNB1 signaling. Able to induce its own expression in dental mesenchymal cells and also in the neighboring dental epithelial cells via an MSX1-mediated pathway. Can also signal through non-canonical BMP pathways such as ERK/MAP kinase, PI3K/Akt, or SRC cascades. For example, induces SRC phosphorylation which, in turn, activates VEGFR2, leading to an angiogenic response. The chain is Bone morphogenetic protein 4 from Bos taurus (Bovine).